Consider the following 1099-residue polypeptide: Carbamoyl phosphate synthase large chain (1099 aa).

The carboxyphosphate synthetic domain stretch occupies residues Met1–Glu402. Positions 129, 169, 175, 176, 208, 210, 215, 241, 242, 243, 285, and 299 each coordinate ATP. The 196-residue stretch at Lys133 to Leu328 folds into the ATP-grasp 1 domain. Mg(2+)-binding residues include Gln285, Glu299, and Asn301. Residues Gln285, Glu299, and Asn301 each coordinate Mn(2+). The tract at residues Gln403 to Asp546 is oligomerization domain. The carbamoyl phosphate synthetic domain stretch occupies residues Glu547 to Asn950. One can recognise an ATP-grasp 2 domain in the interval Ser677–Thr868. ATP is bound by residues Arg713, Arg752, Leu754, Glu759, Gly784, Ile785, His786, Ser787, Gln827, and Glu839. Mg(2+) contacts are provided by Gln827, Glu839, and Asn841. Mn(2+) contacts are provided by Gln827, Glu839, and Asn841. One can recognise an MGS-like domain in the interval Asn951 to Gly1099. The interval Asn951–Gly1099 is allosteric domain.

It belongs to the CarB family. As to quaternary structure, composed of two chains; the small (or glutamine) chain promotes the hydrolysis of glutamine to ammonia, which is used by the large (or ammonia) chain to synthesize carbamoyl phosphate. Tetramer of heterodimers (alpha,beta)4. It depends on Mg(2+) as a cofactor. Mn(2+) is required as a cofactor.

It carries out the reaction hydrogencarbonate + L-glutamine + 2 ATP + H2O = carbamoyl phosphate + L-glutamate + 2 ADP + phosphate + 2 H(+). The enzyme catalyses hydrogencarbonate + NH4(+) + 2 ATP = carbamoyl phosphate + 2 ADP + phosphate + 2 H(+). It participates in amino-acid biosynthesis; L-arginine biosynthesis; carbamoyl phosphate from bicarbonate: step 1/1. It functions in the pathway pyrimidine metabolism; UMP biosynthesis via de novo pathway; (S)-dihydroorotate from bicarbonate: step 1/3. Large subunit of the glutamine-dependent carbamoyl phosphate synthetase (CPSase). CPSase catalyzes the formation of carbamoyl phosphate from the ammonia moiety of glutamine, carbonate, and phosphate donated by ATP, constituting the first step of 2 biosynthetic pathways, one leading to arginine and/or urea and the other to pyrimidine nucleotides. The large subunit (synthetase) binds the substrates ammonia (free or transferred from glutamine from the small subunit), hydrogencarbonate and ATP and carries out an ATP-coupled ligase reaction, activating hydrogencarbonate by forming carboxy phosphate which reacts with ammonia to form carbamoyl phosphate. The protein is Carbamoyl phosphate synthase large chain of Arthrobacter sp. (strain FB24).